The following is a 46-amino-acid chain: Esculentin-1R (46 aa).

Cys-40 and Cys-46 are oxidised to a cystine.

In terms of tissue distribution, expressed by the skin glands.

The protein resides in the secreted. Its function is as follows. Shows antibacterial activity against representative Gram-negative and Gram-positive bacterial species, and hemolytic activity. In Pelophylax ridibundus (Marsh frog), this protein is Esculentin-1R.